A 528-amino-acid chain; its full sequence is Protein spinster homolog 1 (528 aa).

The disordered stretch occupies residues 1 to 38 (MAGSDTAPFLSQADDPDDGPAPGHPGLPGPMGNPKSGE). Ala-2 bears the N-acetylalanine mark. The next 12 helical transmembrane spans lie at 60-80 (LIVVVLCYINLLNYMDRFTVA), 98-118 (GLIQTVFISSYMVLAPVFGYL), 126-146 (YLMCGGIAFWSLVTLGSSFIP), 160-180 (VGVGEASYSTIAPTLIADLFV), 187-207 (MLSIFYFAIPVGSGLGYIAGS), 218-238 (WALRVTPGLGVLAVLLLFLVV), 278-298 (LGFTAVAFVTGSLALWAPAFL), 323-343 (LIFGLITCLTGVLGVGLGVEI), 357-377 (LVCAAGLLGSSPFLFLSLACA), 381-401 (IVATYIFIFIGETLLSMNWAI), 421-441 (FQIVLSHLLGDAGSPYLIGLI), and 465-485 (MLCAFVGALGGAAFLGTAMFI). Ser-518 carries the phosphoserine modification.

Belongs to the major facilitator superfamily. Spinster (TC 2.A.1.49) family. Interacts with BCL2 and BCL2L1.

It localises to the lysosome membrane. The enzyme catalyses a 1-acyl-sn-glycero-3-phosphocholine(out) + H(+)(out) = a 1-acyl-sn-glycero-3-phosphocholine(in) + H(+)(in). The catalysed reaction is 1-hexadecanoyl-sn-glycero-3-phosphocholine(out) + H(+)(out) = 1-hexadecanoyl-sn-glycero-3-phosphocholine(in) + H(+)(in). It carries out the reaction 1-(9Z-octadecenoyl)-sn-glycero-3-phosphocholine(out) + H(+)(out) = 1-(9Z-octadecenoyl)-sn-glycero-3-phosphocholine(in) + H(+)(in). It catalyses the reaction 1-(5Z,8Z,11Z,14Z-eicosatetraenoyl)-sn-glycero-3-phosphocholine(out) + H(+)(out) = 1-(5Z,8Z,11Z,14Z-eicosatetraenoyl)-sn-glycero-3-phosphocholine(in) + H(+)(in). The enzyme catalyses 1-(4Z,7Z,10Z,13Z,16Z,19Z-docosahexaenoyl)-sn-glycero-3-phosphocholine(out) + H(+)(out) = 1-(4Z,7Z,10Z,13Z,16Z,19Z-docosahexaenoyl)-sn-glycero-3-phosphocholine(in) + H(+)(in). The catalysed reaction is a 1-acyl-sn-glycero-3-phosphoethanolamine(out) + H(+)(out) = a 1-acyl-sn-glycero-3-phosphoethanolamine(in) + H(+)(in). It carries out the reaction 1-(9Z-octadecenoyl)-sn-glycero-3-phosphoethanolamine(out) + H(+)(out) = 1-(9Z-octadecenoyl)-sn-glycero-3-phosphoethanolamine(in) + H(+)(in). It catalyses the reaction 1-acyl-sn-glycero-3-phospho-(1'-sn-glycerol)(out) + H(+)(out) = 1-acyl-sn-glycero-3-phospho-(1'-sn-glycerol)(in) + H(+)(in). The enzyme catalyses 1-(9Z-octadecenoyl)-sn-glycero-3-phospho-(1'-sn-glycerol)(out) + H(+)(out) = 1-(9Z-octadecenoyl)-sn-glycero-3-phospho-(1'-sn-glycerol)(in) + H(+)(in). The catalysed reaction is a 1-O-(1Z-alkenyl)-sn-glycero-3-phosphocholine(out) + H(+)(out) = a 1-O-(1Z-alkenyl)-sn-glycero-3-phosphocholine(in) + H(+)(in). It carries out the reaction 1-(1Z-hexadecenyl)-sn-glycero-3-phosphocholine(out) + H(+)(out) = 1-(1Z-hexadecenyl)-sn-glycero-3-phosphocholine(in) + H(+)(in). It catalyses the reaction a 1-O-(1Z-alkenyl)-sn-glycero-3-phosphoethanolamine(out) + H(+)(out) = a 1-O-(1Z-alkenyl)-sn-glycero-3-phosphoethanolamine(in) + H(+)(in). The enzyme catalyses 1-O-(1Z-hexadecenyl)-sn-glycero-3-phosphoethanolamine(out) + H(+)(out) = 1-O-(1Z-hexadecenyl)-sn-glycero-3-phosphoethanolamine(in) + H(+)(in). Plays a critical role in the phospholipid salvage pathway from lysosomes to the cytosol. Mediates the rate-limiting, proton-dependent, lysosomal efflux of lysophospholipids, which can then be reacylated by acyltransferases in the endoplasmic reticulum to form phospholipids. Selective for zwitterionic headgroups such as lysophosphatidylcholine (LPC) and lysophosphatidylethanolamine (LPE), can also transport lysophosphatidylglycerol (LPG), but not other anionic lysophospholipids, sphingosine, nor sphingomyelin. Transports lysophospholipids with saturated, monounsaturated, and polyunsaturated fatty acids, such as 1-hexadecanoyl-sn-glycero-3-phosphocholine, 1-(9Z-octadecenoyl)-sn-glycero-3-phosphocholine and 1-(4Z,7Z,10Z,13Z,16Z,19Z-docosahexaenoyl)-sn-glycero-3-phosphocholine, respectively. Can also transport lysoplasmalogen (LPC with a fatty alcohol) such as 1-(1Z-hexadecenyl)-sn-glycero-3-phosphocholine. Essential player in lysosomal homeostasis. Crucial for cell survival under conditions of nutrient limitation. May be involved in necrotic or autophagic cell death. This Rattus norvegicus (Rat) protein is Protein spinster homolog 1 (Spns1).